A 562-amino-acid polypeptide reads, in one-letter code: Formate--tetrahydrofolate ligase (562 aa).

Position 71–78 (71–78 (TPAGEGKS)) interacts with ATP.

Belongs to the formate--tetrahydrofolate ligase family.

The catalysed reaction is (6S)-5,6,7,8-tetrahydrofolate + formate + ATP = (6R)-10-formyltetrahydrofolate + ADP + phosphate. The protein operates within one-carbon metabolism; tetrahydrofolate interconversion. The chain is Formate--tetrahydrofolate ligase from Bacillus cereus (strain G9842).